A 149-amino-acid chain; its full sequence is Large ribosomal subunit protein uL13 (149 aa).

The protein belongs to the universal ribosomal protein uL13 family. Part of the 50S ribosomal subunit.

Functionally, this protein is one of the early assembly proteins of the 50S ribosomal subunit, although it is not seen to bind rRNA by itself. It is important during the early stages of 50S assembly. The protein is Large ribosomal subunit protein uL13 of Chlorobium chlorochromatii (strain CaD3).